Here is a 350-residue protein sequence, read N- to C-terminus: C5a anaphylatoxin chemotactic receptor 1 (350 aa).

The Extracellular portion of the chain corresponds to 1–36; it reads APMENSTYDYTNYDSLGTLDPSTPVDNTVRRLRPTT. Asn-5 carries N-linked (GlcNAc...) asparagine glycosylation. Tyr-10 and Tyr-13 each carry sulfotyrosine. The helical transmembrane segment at 37 to 63 threads the bilayer; sequence IVALVIYMAVFLVGVPGNALVVWVTAL. Residues 64 to 68 lie on the Cytoplasmic side of the membrane; sequence EAKRT. The helical transmembrane segment at 69-92 threads the bilayer; the sequence is VNAIWFLNLAVADLLSCLALPILF. Over 93–109 the chain is Extracellular; it reads VSIIQEGHWPFGRAACS. Cys-108 and Cys-187 are joined by a disulfide. Residues 110–131 traverse the membrane as a helical segment; it reads VLPSLILLNMYASILLLATISA. Over 132-152 the chain is Cytoplasmic; the sequence is DRFLLVFNPIWCQNTRGAGLA. The helical transmembrane segment at 153–173 threads the bilayer; it reads WLACCVAWGLALLLTIPSFLY. The Extracellular segment spans residues 174–200; that stretch reads RKVLQDDYPPKTTCGVDYGHEGVRAER. A helical transmembrane segment spans residues 201-226; that stretch reads AVAIVRLVVGFLLPLFTLSVCYTFLL. The Cytoplasmic segment spans residues 227–242; it reads LRTWSRNGTRSTKTLK. Residues 243–265 form a helical membrane-spanning segment; the sequence is VVVAVVVSFFIFWLPYQVMGMIL. At 266–282 the chain is on the extracellular side; it reads ALLHPSSATFRWAIRLD. The chain crosses the membrane as a helical span at residues 283–303; the sequence is PLCIALAYVNCCINPIIYVVA. Residues 304 to 350 are Cytoplasmic-facing; it reads GKGFQGQLRKSLPSLLRNVLAEESVIQGSKSFSRSTVDTVADKCQAV. 6 positions are modified to phosphoserine: Ser-314, Ser-317, Ser-327, Ser-332, Ser-334, and Ser-338.

Belongs to the G-protein coupled receptor 1 family. As to quaternary structure, homodimer. May also form higher-order oligomers. Interacts (when phosphorylated) with ARRB1 and ARRB2; the interaction is associated with internalization of C5aR. Post-translationally, sulfation plays a critical role in the association of C5aR with C5a, but no significant role in the ability of the receptor to transduce a signal and mobilize calcium in response to a small peptide agonist. In terms of processing, phosphorylated on serine residues in response to C5a binding, resulting in internalization of the receptor and short-term desensitization to C5a.

The protein localises to the cell membrane. It localises to the cytoplasmic vesicle. Functionally, receptor for the chemotactic and inflammatory peptide anaphylatoxin C5a. The ligand interacts with at least two sites on the receptor: a high-affinity site on the extracellular N-terminus, and a second site in the transmembrane region which activates downstream signaling events. Receptor activation stimulates chemotaxis, granule enzyme release, intracellular calcium release and superoxide anion production. The polypeptide is C5a anaphylatoxin chemotactic receptor 1 (C5AR1) (Oryctolagus cuniculus (Rabbit)).